The sequence spans 2871 residues: Fibrillin-1 (2871 aa).

Positions 1 to 24 (MRRGGLLEVALGFTVLLASYTSHG) are cleaved as a signal peptide. Residues 25–44 (ADTNLEAGNVKETRANRAKR) constitute a propeptide that is removed on maturation. Residues 45 to 81 (RGGGGHDALKGPNVCGSRYNAYCCPGWKTLPGGNQCI) form a fibrillin unique N-terminal (FUN) domain region. The N-terminal domain stretch occupies residues 45-450 (RGGGGHDALK…PPRVLPVNVT (406 aa)). 11 cysteine pairs are disulfide-bonded: Cys-59/Cys-68, Cys-67/Cys-80, Cys-85/Cys-94, Cys-89/Cys-100, Cys-102/Cys-111, Cys-119/Cys-129, Cys-123/Cys-134, Cys-136/Cys-145, Cys-150/Cys-160, Cys-154/Cys-166, and Cys-168/Cys-177. EGF-like domains follow at residues 81-112 (IVPI…PSCG), 115-146 (SIQH…THCG), and 147-178 (QPVC…PQCE). Residues 119-329 (CNIRCMNGGS…YTSPDGTRCI (211 aa)) form an interaction with MFAP4 region. A TB 1 domain is found at 184-236 (GPCFTVISNQMCQGQLSGIVCTKTLCCATVGRAWGHPCEMCPAQPHPCRRGFI). The interval 195–221 (CQGQLSGIVCTKTLCCATVGRAWGHPC) is hybrid domain 1. The 42-residue stretch at 246–287 (DVDECQAIPGLCQGGNCINTVGSFECKCPAGHKFNEVSQKCE) folds into the EGF-like 4; calcium-binding domain. Disulfide bonds link Cys-250-Cys-262, Cys-257-Cys-271, Cys-273-Cys-286, Cys-292-Cys-304, Cys-299-Cys-313, and Cys-315-Cys-328. Ser-268 carries O-linked (Glc) serine glycosylation. The region spanning 288–329 (DIDECSTIPGICDGGECTNTVSSYFCKCPPGFYTSPDGTRCI) is the EGF-like 5; calcium-binding domain. One can recognise a TB 2 domain in the interval 334–389 (GYCYTALANGRCSNQLPQSITKMQCCCDVGRCWSPGVTVAPEMCPIRATEDFNKLC). The N-linked (GlcNAc...) asparagine glycan is linked to Asn-448. The region spanning 449 to 489 (VTDYCQLFRYLCQNGRCIPTPGSYRCECNKGFQLDLRGECI) is the EGF-like 6 domain. 15 disulfides stabilise this stretch: Cys-453-Cys-465, Cys-460-Cys-474, Cys-476-Cys-488, Cys-494-Cys-504, Cys-499-Cys-513, Cys-515-Cys-528, Cys-534-Cys-546, Cys-541-Cys-555, Cys-557-Cys-570, Cys-576-Cys-587, Cys-582-Cys-596, Cys-598-Cys-611, Cys-617-Cys-628, Cys-623-Cys-637, and Cys-639-Cys-652. The O-linked (Glc) serine glycan is linked to Ser-471. The EGF-like 7; calcium-binding domain maps to 490–529 (DVDECEKNPCAGGECINTQGSYTCQCRPGYQSTLTRTECR). Ser-510 carries O-linked (Glc) serine glycosylation. Residues 530-571 (DIDECLQNGRICNNGRCINTDGSFHCVCNAGFHVTRDGKNCE) enclose the EGF-like 8; calcium-binding domain. The EGF-like 9; calcium-binding domain occupies 572–612 (DMDECSIRNMCLNGMCINEDGSFKCICKPGFQLASDGRYCK). The EGF-like 10; calcium-binding domain maps to 613–653 (DINECETPGICMNGRCVNTDGSYRCECFPGLAVGLDGRVCV). The 53-residue stretch at 659 to 711 (STCYGGYKRGQCVKPLFGAVTKSECCCASTEYAFGEPCQPCPSQNSAEYQALC) folds into the TB 3 domain. Positions 723–764 (DINECALDPDICPNGICENLRGTYKCICNSGYEVDSTGKNCV) constitute an EGF-like 11; calcium-binding domain. 16 disulfide bridges follow: Cys-727/Cys-739, Cys-734/Cys-748, Cys-750/Cys-763, Cys-769/Cys-781, Cys-776/Cys-790, Cys-792/Cys-805, Cys-811/Cys-821, Cys-816/Cys-830, Cys-832/Cys-845, Cys-853/Cys-875, Cys-862/Cys-887, Cys-876/Cys-890, Cys-896/Cys-908, Cys-914/Cys-926, Cys-921/Cys-935, and Cys-937/Cys-950. The 42-residue stretch at 765–806 (DINECVLNSLLCDNGQCRNTPGSFVCTCPKGFIYKPELKTCE) folds into the EGF-like 12; calcium-binding domain. The region spanning 807 to 846 (DIDECESSPCINGVCKNSPGSFICECSSESTLDPTKTICI) is the EGF-like 13; calcium-binding domain. The 52-residue stretch at 851–902 (GTCWQTVIDGRCEININGATLKSQCCSSLGAAWGSPCTPCQVDPICGKGYSR) folds into the TB 4 domain. Residues 862-887 (CEININGATLKSQCCSSLGAAWGSPC) are hybrid domain 2. An EGF-like 14; calcium-binding domain is found at 910 to 951 (DIDECEVFPGVCKNGLCVNSKGSFKCQCPSGMTLDATGRICL). In terms of domain architecture, TB 5 spans 956–1008 (ETCFLRYEDEECTLPVAGRHRMDACCCSVGAAWGTEECEECPVRNTPEYEELC). The EGF-like 15; calcium-binding domain maps to 1028 to 1069 (DINECKMIPNLCTHGKCRNTIGSFKCRCDSGFALDSEERNCT). 46 disulfides stabilise this stretch: Cys-1032/Cys-1044, Cys-1039/Cys-1053, Cys-1055/Cys-1068, Cys-1074/Cys-1086, Cys-1081/Cys-1095, Cys-1097/Cys-1111, Cys-1117/Cys-1129, Cys-1124/Cys-1138, Cys-1140/Cys-1153, Cys-1159/Cys-1171, Cys-1166/Cys-1180, Cys-1182/Cys-1195, Cys-1201/Cys-1212, Cys-1208/Cys-1221, Cys-1223/Cys-1236, Cys-1242/Cys-1254, Cys-1249/Cys-1263, Cys-1265/Cys-1278, Cys-1284/Cys-1296, Cys-1291/Cys-1305, Cys-1307/Cys-1320, Cys-1326/Cys-1339, Cys-1333/Cys-1348, Cys-1350/Cys-1361, Cys-1367/Cys-1380, Cys-1374/Cys-1389, Cys-1391/Cys-1402, Cys-1408/Cys-1420, Cys-1415/Cys-1429, Cys-1431/Cys-1444, Cys-1450/Cys-1461, Cys-1456/Cys-1470, Cys-1472/Cys-1485, Cys-1491/Cys-1502, Cys-1497/Cys-1511, Cys-1513/Cys-1526, Cys-1534/Cys-1562, Cys-1549/Cys-1574, Cys-1563/Cys-1577, Cys-1564/Cys-1589, Cys-1610/Cys-1622, Cys-1617/Cys-1631, Cys-1633/Cys-1646, Cys-1652/Cys-1663, Cys-1658/Cys-1672, and Cys-1674/Cys-1687. Residue Asn-1067 is glycosylated (N-linked (GlcNAc...) asparagine). An EGF-like 16; calcium-binding domain is found at 1070–1112 (DIDECRISPDLCGRGQCVNTPGDFECKCDEGYESGFMMMKNCM). The EGF-like 17; calcium-binding domain maps to 1113–1154 (DIDECQRDPLLCRGGVCLNTEGSYRCECPPGHQLAPNISACI). A glycan (O-linked (Glc) serine) is linked at Ser-1135. The N-linked (GlcNAc...) asparagine glycan is linked to Asn-1149. The EGF-like 18; calcium-binding domain maps to 1155-1196 (DINECELSAHLCPHGRCVNLIGKYQCACNPGYHSTPDRLFCV). Residues 1197–1237 (DIDECSIMNGGCETFCTNSEGSYECSCQPGFALMPDQRSCT) form the EGF-like 19; calcium-binding domain. Ser-1218 is a glycosylation site (O-linked (Glc) serine). An EGF-like 20; calcium-binding domain is found at 1238 to 1279 (DIDECEDNPNICDGGQCTNIPGEYRCLCYDGFMASEDMKTCV). An EGF-like 21; calcium-binding domain is found at 1280-1321 (DVNECDLNPNICLSGTCENTKGSFICHCDMGYSGKKGKTGCT). An O-linked (Glc) serine glycan is attached at Ser-1302. The 41-residue stretch at 1322–1362 (DINECEIGAHNCDRHAVCTNTAGSFKCSCSPGWIGDGIKCT) folds into the EGF-like 22; calcium-binding domain. Ser-1345 is a glycosylation site (O-linked (Glc) serine). Positions 1363-1403 (DLDECSNGTHMCSQHADCKNTMGSYRCLCKEGYTGDGFTCT) constitute an EGF-like 23; calcium-binding domain. The N-linked (GlcNAc...) asparagine glycan is linked to Asn-1369. Ser-1386 carries O-linked (Glc) serine glycosylation. Residues 1404–1445 (DLDECSENLNLCGNGQCLNAPGGYRCECDMGFVPSADGKACE) enclose the EGF-like 24; calcium-binding domain. An EGF-like 25; calcium-binding domain is found at 1446–1486 (DIDECSLPNICVFGTCHNLPGLFRCECEIGYELDRSGGNCT). An N-linked (GlcNAc...) asparagine glycan is attached at Asn-1484. An EGF-like 26; calcium-binding domain is found at 1487–1527 (DVNECLDPTTCISGNCVNTPGSYTCDCPPDFELNPTRVGCV). Ser-1508 carries O-linked (Glc) serine glycosylation. The interval 1528-2731 (DTRSGNCYLD…GYPKRGRKRR (1204 aa)) is C-terminal domain. One can recognise a TB 6 domain in the interval 1532–1589 (GNCYLDIRPRGDNGDTACSNEIGVGVSKASCCCSLGKAWGTPCELCPPVNTSEYKILC). A Cell attachment site motif is present at residues 1541–1543 (RGD). Asn-1581 is a glycosylation site (N-linked (GlcNAc...) asparagine). An EGF-like 27; calcium-binding domain is found at 1606 to 1647 (DIDECQELPGLCQGGKCINTFGSFQCRCPTGYYLNEDTRVCD). The O-linked (Glc) serine glycan is linked to Ser-1628. The region spanning 1648–1688 (DVNECETPGICGPGTCYNTVGNYTCICPPDYMQVNGGNNCM) is the EGF-like 28; calcium-binding domain. N-linked (GlcNAc...) asparagine glycosylation occurs at Asn-1669. The 56-residue stretch at 1693–1748 (SLCYRNYYADNQTCDGELLFNMTKKMCCCSYNIGRAWNKPCEQCPIPSTDEFATLC) folds into the TB 7 domain. Residues Asn-1703 and Asn-1713 are each glycosylated (N-linked (GlcNAc...) asparagine). Positions 1766–1807 (DIDECREIPGVCENGVCINMVGSFRCECPVGFFYNDKLLVCE) constitute an EGF-like 29; calcium-binding domain. Disulfide bonds link Cys-1770/Cys-1782, Cys-1777/Cys-1791, Cys-1793/Cys-1806, Cys-1812/Cys-1824, Cys-1818/Cys-1833, Cys-1835/Cys-1847, Cys-1853/Cys-1865, Cys-1860/Cys-1874, Cys-1876/Cys-1889, Cys-1895/Cys-1905, Cys-1900/Cys-1914, Cys-1916/Cys-1928, Cys-1934/Cys-1947, Cys-1942/Cys-1956, Cys-1958/Cys-1971, Cys-1977/Cys-1989, Cys-1984/Cys-1998, Cys-2000/Cys-2011, Cys-2017/Cys-2029, Cys-2024/Cys-2038, Cys-2040/Cys-2053, Cys-2061/Cys-2083, Cys-2070/Cys-2096, Cys-2084/Cys-2099, Cys-2085/Cys-2111, Cys-2131/Cys-2142, Cys-2137/Cys-2151, Cys-2153/Cys-2164, Cys-2170/Cys-2181, Cys-2176/Cys-2190, Cys-2192/Cys-2204, Cys-2210/Cys-2221, Cys-2217/Cys-2230, Cys-2232/Cys-2245, Cys-2251/Cys-2265, Cys-2258/Cys-2274, Cys-2276/Cys-2289, Cys-2295/Cys-2307, Cys-2302/Cys-2316, and Cys-2318/Cys-2331. Positions 1808–1848 (DIDECQNGPVCQRNAECINTAGSYRCDCKPGYRFTSTGQCN) constitute an EGF-like 30; calcium-binding domain. Ser-1830 carries O-linked (Glc) serine glycosylation. Residues 1849-1890 (DRNECQEIPNICSHGQCIDTVGSFYCLCHTGFKTNADQTMCL) form the EGF-like 31; calcium-binding domain. O-linked (Glc) serine glycosylation occurs at Ser-1871. An EGF-like 32; calcium-binding domain is found at 1891 to 1929 (DINECERDACGNGTCRNTIGSFNCRCNHGFILSHNNDCI). An N-linked (GlcNAc...) asparagine glycan is attached at Asn-1902. An O-linked (Glc) serine glycan is attached at Ser-1911. The region spanning 1930 to 1972 (DVDECATGNGNLCRNGQCINTVGSFQCQCNEGYEVAPDGRTCV) is the EGF-like 33; calcium-binding domain. Ser-1953 is a glycosylation site (O-linked (Glc) serine). An EGF-like 34; calcium-binding domain is found at 1973–2012 (DINECLLDPRKCAPGTCQNLDGSYRCICPPGYSLQNDKCE). Residues 2013 to 2054 (DIDECVEEPEICALGTCSNTEGSFKCLCPDGFSLSSTGRRCQ) form the EGF-like 35; calcium-binding domain. O-linked (Glc) serine glycosylation is present at Ser-2035. Positions 2059–2111 (SYCYAKFEGGKCSSPKSRNHSKQECCCALKGEGWGDPCELCPTEPDEAFRQIC) constitute a TB 8 domain. A glycan (N-linked (GlcNAc...) asparagine) is linked at Asn-2077. The EGF-like 36; calcium-binding domain occupies 2127-2165 (DMDECKEPDVCKHGQCINTDGSYRCECPFGYILQGNECV). O-linked (Glc) serine glycosylation is present at Ser-2148. An EGF-like 37; calcium-binding domain is found at 2166–2205 (DTDECSVGNPCGNGTCKNVIGGFECTCEEGFEPGPMMTCE). Residue Asn-2178 is glycosylated (N-linked (GlcNAc...) asparagine). The EGF-like 38; calcium-binding domain occupies 2206–2246 (DINECAQNPLLCAFRCVNTYGSYECKCPAGYVLREDRRMCK). An O-linked (Glc) serine glycan is attached at Ser-2227. The EGF-like 39; calcium-binding domain occupies 2247 to 2290 (DEDECEEGKHDCAEKQMECKNLIGTYLCICGPGYQRRPDGEGCV). Positions 2291-2332 (DENECQTKPGICENGRCLNTRGSYTCECNDGFTASPNQDECL) constitute an EGF-like 40; calcium-binding domain. Ser-2313 carries O-linked (Glc) serine glycosylation. One can recognise a TB 9 domain in the interval 2337-2390 (GYCFTEVLQNMCQIGSSNRNPVTKSECCCDGGRGWGPHCEICPFQGTVAFKKLC). In terms of domain architecture, EGF-like 41; calcium-binding spans 2402–2443 (DIDECKVIHDVCRNGECVNDRGSYHCICKTGYTPDITGTACV). Cystine bridges form between Cys-2406–Cys-2418, Cys-2413–Cys-2427, Cys-2429–Cys-2442, Cys-2448–Cys-2459, Cys-2455–Cys-2468, Cys-2470–Cys-2483, Cys-2489–Cys-2500, Cys-2496–Cys-2509, Cys-2511–Cys-2522, Cys-2528–Cys-2541, Cys-2535–Cys-2550, Cys-2552–Cys-2565, Cys-2571–Cys-2581, Cys-2577–Cys-2590, Cys-2592–Cys-2605, Cys-2611–Cys-2622, Cys-2617–Cys-2631, Cys-2633–Cys-2646, Cys-2652–Cys-2663, Cys-2659–Cys-2672, and Cys-2674–Cys-2686. In terms of domain architecture, EGF-like 42; calcium-binding spans 2444–2484 (DLNECNQAPKPCNFICKNTEGSYQCSCPKGYILQEDGRSCK). An O-linked (Glc) serine glycan is attached at Ser-2465. The region spanning 2485-2523 (DLDECATKQHNCQFLCVNTIGSFTCKCPPGFTQHHTACI) is the EGF-like 43; calcium-binding domain. In terms of domain architecture, EGF-like 44; calcium-binding spans 2524-2566 (DNNECTSDINLCGSKGICQNTPGSFTCECQRGFSLDPSGASCE). The O-linked (Glc) serine glycan is linked to Ser-2547. Residues 2567–2606 (DVDECEGNHRCQHGCQNIIGGYRCSCPQGYLQHYQWNQCV) form the EGF-like 45; calcium-binding domain. The EGF-like 46; calcium-binding domain maps to 2607–2647 (DENECLSAHICGGASCHNTLGSYKCMCPAGFQYEQFSGGCQ). O-linked (Glc) serine glycosylation occurs at Ser-2628. Positions 2648 to 2687 (DINECGSAQAPCSYGCSNTEGGYLCACPPGYFRIGQGHCV) constitute an EGF-like 47; calcium-binding domain. A phosphoserine mark is found at Ser-2702 and Ser-2709. N-linked (GlcNAc...) asparagine glycosylation is found at Asn-2734, Asn-2750, and Asn-2767.

The protein belongs to the fibrillin family. In terms of assembly, interacts with COL16A1. Interacts with integrin alpha-V/beta-3. Interacts with ADAMTS10; this interaction promotes microfibril assembly. Interacts with THSD4; this interaction promotes fibril formation. Interacts (via N-terminal domain) with FBLN2 and FBLN5. Interacts with ELN. Forms a ternary complex with ELN and FBLN2 or FBLN5 and a significant interaction with ELN seen only in the presence of FBLN2 or FBLN5. Interacts (via N-terminal domain) with LTBP2 (via C-terminal domain) in a Ca(+2)-dependent manner. Interacts (via N-terminal domain) with LTBP1 (via C-terminal domain). Interacts with integrins ITGA5:ITGB1, ITGAV:ITGB3 and ITGAV:ITGB6. Interacts (via N-terminal domain) with BMP2, BMP4, BMP7, BMP10 and GDF5. Interacts (via N-terminal domain) with MFAP2 and MFAP5. Interacts with ADAMTSL5. Interacts with MFAP4. Interacts (via N-terminal domain) with TNFSF11 in a Ca(+2)-dependent manner. Interacts (via N-terminal domain) with EFEMP2; this interaction inhibits EFEMP2 binding to LOX and ELN. Cleavage of N- and C-terminus by furin is required for incorporation into the extracellular matrix and assembly into microfibrils. The C-terminus, which corresponds to the Asprosin chain, was initially thought to constitute a propeptide. Fibrillin-1 and Asprosin chains are still linked together during the secretion from cells, but are subsequently separated by furin, an essential step for incorporation of Fibrillin-1 into the nascent microfibrils. Post-translationally, forms intermolecular disulfide bonds either with other fibrillin-1 molecules or with other components of the microfibrils. In terms of processing, O-glycosylated on serine residues by POGLUT2 and POGLUT3 which is necessary for efficient protein secretion.

The protein localises to the secreted. The protein resides in the extracellular space. It is found in the extracellular matrix. Structural component of the 10-12 nm diameter microfibrils of the extracellular matrix, which conveys both structural and regulatory properties to load-bearing connective tissues. Fibrillin-1-containing microfibrils provide long-term force bearing structural support. In tissues such as the lung, blood vessels and skin, microfibrils form the periphery of the elastic fiber, acting as a scaffold for the deposition of elastin. In addition, microfibrils can occur as elastin-independent networks in tissues such as the ciliary zonule, tendon, cornea and glomerulus where they provide tensile strength and have anchoring roles. Fibrillin-1 also plays a key role in tissue homeostasis through specific interactions with growth factors, such as the bone morphogenetic proteins (BMPs), growth and differentiation factors (GDFs) and latent transforming growth factor-beta-binding proteins (LTBPs), cell-surface integrins and other extracellular matrix protein and proteoglycan components. Regulates osteoblast maturation by controlling TGF-beta bioavailability and calibrating TGF-beta and BMP levels, respectively. Negatively regulates osteoclastogenesis by binding and sequestering an osteoclast differentiation and activation factor TNFSF11. This leads to disruption of TNFSF11-induced Ca(2+) signaling and impairment of TNFSF11-mediated nuclear translocation and activation of transcription factor NFATC1 which regulates genes important for osteoclast differentiation and function. Mediates cell adhesion via its binding to cell surface receptors integrins ITGAV:ITGB3 and ITGA5:ITGB1. Binds heparin and this interaction plays an important role in the assembly of microfibrils. Functionally, hormone that targets the liver to increase plasma glucose levels. Secreted by white adipose tissue and circulates in the plasma. Acts in response to fasting and promotes blood glucose elevation by binding to the surface of hepatocytes. Promotes hepatocyte glucose release by activating the protein kinase A activity in the liver, resulting in rapid glucose release into the circulation. This is Fibrillin-1 from Bos taurus (Bovine).